The chain runs to 269 residues: NAD-capped RNA hydrolase NudC (269 aa).

A substrate-binding site is contributed by arginine 81. 4 residues coordinate Zn(2+): cysteine 110, cysteine 113, cysteine 128, and cysteine 131. Position 136 (tyrosine 136) interacts with substrate. Residues 137-260 (PRIFPCIIVA…TIARALIEQT (124 aa)) form the Nudix hydrolase domain. Residues alanine 170, glutamate 186, and glutamate 190 each coordinate a divalent metal cation. Residues 171 to 192 (GFVEVGETLEQCVAREVLEETG) carry the Nudix box motif. Substrate is bound at residue 204–211 (QPWAFPSS). A divalent metal cation is bound at residue glutamate 231. Alanine 253 contacts substrate.

It belongs to the Nudix hydrolase family. NudC subfamily. As to quaternary structure, homodimer. Mg(2+) is required as a cofactor. Mn(2+) serves as cofactor. Requires Zn(2+) as cofactor.

The enzyme catalyses a 5'-end NAD(+)-phospho-ribonucleoside in mRNA + H2O = a 5'-end phospho-adenosine-phospho-ribonucleoside in mRNA + beta-nicotinamide D-ribonucleotide + 2 H(+). It carries out the reaction NAD(+) + H2O = beta-nicotinamide D-ribonucleotide + AMP + 2 H(+). It catalyses the reaction NADH + H2O = reduced beta-nicotinamide D-ribonucleotide + AMP + 2 H(+). In terms of biological role, mRNA decapping enzyme that specifically removes the nicotinamide adenine dinucleotide (NAD) cap from a subset of mRNAs by hydrolyzing the diphosphate linkage to produce nicotinamide mononucleotide (NMN) and 5' monophosphate mRNA. The NAD-cap is present at the 5'-end of some mRNAs and stabilizes RNA against 5'-processing. Has preference for mRNAs with a 5'-end purine. Catalyzes the hydrolysis of a broad range of dinucleotide pyrophosphates. The protein is NAD-capped RNA hydrolase NudC of Vibrio cholerae serotype O1 (strain ATCC 39315 / El Tor Inaba N16961).